The following is a 229-amino-acid chain: Putative N-acetylmannosamine-6-phosphate 2-epimerase 2 (229 aa).

This sequence belongs to the NanE family.

It catalyses the reaction an N-acyl-D-glucosamine 6-phosphate = an N-acyl-D-mannosamine 6-phosphate. The protein operates within amino-sugar metabolism; N-acetylneuraminate degradation; D-fructose 6-phosphate from N-acetylneuraminate: step 3/5. Its function is as follows. Converts N-acetylmannosamine-6-phosphate (ManNAc-6-P) to N-acetylglucosamine-6-phosphate (GlcNAc-6-P). This Salmonella typhimurium (strain LT2 / SGSC1412 / ATCC 700720) protein is Putative N-acetylmannosamine-6-phosphate 2-epimerase 2 (nanE2).